Here is a 101-residue protein sequence, read N- to C-terminus: Anti-lipopolysaccharide factor (101 aa).

An intrachain disulfide couples Cys-31 to Cys-52.

Binds tightly to LPS and thus specifically inhibits the LPS-mediated activation of the hemolymph coagulation. It has a strong antibacterial effect especially on the growth of Gram-negative bacteria. The protein is Anti-lipopolysaccharide factor of Limulus polyphemus (Atlantic horseshoe crab).